Reading from the N-terminus, the 546-residue chain is Nicotinic acid-CoA ligase olcI (546 aa).

194-205 (MFSTSGTSGLPK) is a binding site for AMP. Residues 445-523 (EIEAVLLKDP…ESLPRTGIGK (79 aa)) form an AMP-binding region.

This sequence belongs to the ATP-dependent AMP-binding enzyme family.

The catalysed reaction is nicotinate + ATP + CoA = nicotinyl-CoA + AMP + diphosphate. The protein operates within secondary metabolite biosynthesis; terpenoid biosynthesis. Functionally, nicotinic acid-CoA ligase; part of the gene cluster that mediates the biosynthesis of 15-deoxyoxalicine B. The first step of the pathway is the synthesis of nicotinyl-CoA from nicotinic acid by the nicotinic acid-CoA ligase olcI. Nicotinyl-CoA is then a substrate of polyketide synthase olcA to produce 4-hydroxy-6-(3-pyridinyl)-2H-pyran-2-one (HPPO) which is further prenylated by the polyprenyl transferase olcH to yield geranylgeranyl-HPPO. Geranylgeranyl pyrophosphate is provided by the cluster-specific geranylgeranyl pyrophosphate synthase olcC. The FAD-dependent monooxygenase olcE catalyzes the epoxidation of geranylgeranyl-HPPO and the terpene cyclase olcD catalyzes the cyclization of the terpenoid component, resulting in the formation of the tricyclic terpene moiety seen in predecaturin E. The cytochrome P450 monooxygenase then catalyzes the allylic oxidation of predecaturin E, which is followed by spirocylization with concomitant loss of one molecule of water to form decaturin E. Decaturin E is the substrate of the cytochrome P450 monooxygenase olcJ which hydroxylates it at the C-29 position to form decaturin F. The short-chain dehydrogenase/reductase olcF may catalyze the oxidation of decaturin F to generate the 29-hydroxyl-27-one intermediate, and subsequent hemiacetal formation probably leads to the formation of decaturin C. The dioxygenase olcK may be a peroxisomal enzyme that catalyzes the hydroxylation of decaturin C into decaturin A once decaturin C is shuttled into the peroxisome by the MFS transporter olcL. Finally the cytochrome P450 monooxygenase olcB catalyzes the oxidative rearrangement to yield 15-deoxyoxalicine B. In the absence of olcJ, decaturin E may be shunted to a pathway in which it is oxidized to a ketone, possibly by olcF, to form decaturin D, which undergoes further allylic oxidation to yield decaturin G. Moreover, in the absence of oclK or oclL, oclB can convert decaturin C into 15-deoxyoxalicine A. The sequence is that of Nicotinic acid-CoA ligase olcI from Penicillium canescens.